A 363-amino-acid polypeptide reads, in one-letter code: Phosphoserine aminotransferase (363 aa).

Arginine 42 provides a ligand contact to L-glutamate. Pyridoxal 5'-phosphate is bound by residues 76 to 77 (AS), tryptophan 101, threonine 151, aspartate 170, and glutamine 193. Position 194 is an N6-(pyridoxal phosphate)lysine (lysine 194). 234–235 (NT) is a pyridoxal 5'-phosphate binding site.

This sequence belongs to the class-V pyridoxal-phosphate-dependent aminotransferase family. SerC subfamily. In terms of assembly, homodimer. The cofactor is pyridoxal 5'-phosphate.

It localises to the cytoplasm. It carries out the reaction O-phospho-L-serine + 2-oxoglutarate = 3-phosphooxypyruvate + L-glutamate. The enzyme catalyses 4-(phosphooxy)-L-threonine + 2-oxoglutarate = (R)-3-hydroxy-2-oxo-4-phosphooxybutanoate + L-glutamate. It participates in amino-acid biosynthesis; L-serine biosynthesis; L-serine from 3-phospho-D-glycerate: step 2/3. Functionally, catalyzes the reversible conversion of 3-phosphohydroxypyruvate to phosphoserine and of 3-hydroxy-2-oxo-4-phosphonooxybutanoate to phosphohydroxythreonine. The sequence is that of Phosphoserine aminotransferase from Listeria monocytogenes serovar 1/2a (strain ATCC BAA-679 / EGD-e).